The chain runs to 323 residues: MITLITHVINPLAYIVPVLLAVAFLTLLERKVLGYMQLRKGPNIVGPYGLLQPIADGLKLFIKETVRPSTSSPFLFLATPMLALTLALTLWAPMPIPYPVTDLNLGVLFVLALSSLAVYSILGSGWASNSKYALIGELRAVAQTISYEVSLGLILLSVIIITGGFTLQTFNVAQESIWLLVPAWPLAAMWYISTLAETNRAPFDLTEGESELVSGFNVEYAGGPFALFFLAEYANILLMNTLSAVLFLGASHIPAFPELTALNLMTKAALLSVVFLWVRASYPRFRYDQLMHLVWKSFLPLTLALVLWHLALPIALAGLPPQL.

8 helical membrane-spanning segments follow: residues 8 to 28, 74 to 94, 105 to 125, 145 to 165, 176 to 196, 236 to 256, 258 to 278, and 298 to 318; these read VINP…LTLL, FLFL…WAPM, LGVL…LGSG, ISYE…TGGF, SIWL…STLA, ILLM…IPAF, ELTA…FLWV, and FLPL…ALAG.

Belongs to the complex I subunit 1 family.

It is found in the mitochondrion inner membrane. It catalyses the reaction a ubiquinone + NADH + 5 H(+)(in) = a ubiquinol + NAD(+) + 4 H(+)(out). Core subunit of the mitochondrial membrane respiratory chain NADH dehydrogenase (Complex I) that is believed to belong to the minimal assembly required for catalysis. Complex I functions in the transfer of electrons from NADH to the respiratory chain. The immediate electron acceptor for the enzyme is believed to be ubiquinone. The protein is NADH-ubiquinone oxidoreductase chain 1 (MT-ND1) of Oncorhynchus mykiss (Rainbow trout).